We begin with the raw amino-acid sequence, 656 residues long: Macrolide export ATP-binding/permease protein MacB (656 aa).

The 239-residue stretch at 20 to 258 (IELAGITRSF…EPDFAPHVDR (239 aa)) folds into the ABC transporter domain. 56–63 (GASGSGKS) is an ATP binding site. 4 helical membrane-spanning segments follow: residues 284–304 (ALTLLGIVIGVASVIAMLAIG), 531–551 (LTILLGTVAAISLLVGGIGVM), 591–611 (ALGGLIGVAVGLGTAAVIALF), and 619–639 (LLPVVLAFGCAFATGLVFGYL).

This sequence belongs to the ABC transporter superfamily. Macrolide exporter (TC 3.A.1.122) family. As to quaternary structure, homodimer.

It localises to the cell inner membrane. In terms of biological role, non-canonical ABC transporter that contains transmembrane domains (TMD), which form a pore in the inner membrane, and an ATP-binding domain (NBD), which is responsible for energy generation. Confers resistance against macrolides. The protein is Macrolide export ATP-binding/permease protein MacB of Azoarcus sp. (strain BH72).